We begin with the raw amino-acid sequence, 261 residues long: Thioesterase frbD (261 aa).

This sequence belongs to the AMT4 thioesterase family.

It functions in the pathway antifungal biosynthesis. Functionally, thioesterase; part of the gene cluster that mediates the biosynthesis of the antifungal antibiotic FR901469, an inhibitor of beta-1,3-glucansynthase, exerting antifungal activity against the pathogenes Candida albicans and Aspergillus fumigatus. FR901469 is a cyclic depsipeptide containing 12 amino acid residues and a fatty acid chain. The NRPS frbI contains 12 modules responsible for the formation of the depsipeptide backbone which is denoted as Acyl-Thr-Ala-Tyr-Val-4OHPro-Thr-Thr-3OHPro-threo3OHGln-Gly-Thr-Orn-OH (C71H116N14O23). The PKS frbB is probably involved in the production of the hydrocarbon chain, and the acyl-CoA ligase frbC might be involved in the transport of the chain to the peptide ptoduct of frbI. Because FR901469 contains 3 hydroxylated amino acid residues, the 3 oxygenases frbA, frbH, and frbJ might be participating in amino acid hydroxylation. As no thioesterase domains were detected in frbI or frbB, the thioesterases frbD and frbE may instead release and cyclize the products of the NRPS and PKS, respectively. This chain is Thioesterase frbD, found in Dothideomycetidae sp. (strain 11243) (Fungal sp. (strain No.11243)).